The chain runs to 513 residues: Chromosomal replication initiator protein DnaA (513 aa).

Positions 1-87 (MSVELWQQCV…IGSKRSSAPR (87 aa)) are domain I, interacts with DnaA modulators. The segment at 87-176 (RAAPNAPLAA…QVEGALKHTS (90 aa)) is domain II. The segment at 113–163 (AAPAPAPAPTSAPAKKAAAQKAAEVSEEPSRDSFDPMAGASSQQAPVRAEQ) is disordered. Low complexity predominate over residues 123 to 135 (SAPAKKAAAQKAA). The domain III, AAA+ region stretch occupies residues 177–393 (YLNRTFTFEN…GALKRVIAHS (217 aa)). Residues G221, G223, K224, and T225 each contribute to the ATP site. A domain IV, binds dsDNA region spans residues 394–513 (HFMGRDITIE…YKNLLRTLTT (120 aa)).

Belongs to the DnaA family. In terms of assembly, oligomerizes as a right-handed, spiral filament on DNA at oriC.

It localises to the cytoplasm. Its function is as follows. Plays an essential role in the initiation and regulation of chromosomal replication. ATP-DnaA binds to the origin of replication (oriC) to initiate formation of the DNA replication initiation complex once per cell cycle. Binds the DnaA box (a 9 base pair repeat at the origin) and separates the double-stranded (ds)DNA. Forms a right-handed helical filament on oriC DNA; dsDNA binds to the exterior of the filament while single-stranded (ss)DNA is stabiized in the filament's interior. The ATP-DnaA-oriC complex binds and stabilizes one strand of the AT-rich DNA unwinding element (DUE), permitting loading of DNA polymerase. After initiation quickly degrades to an ADP-DnaA complex that is not apt for DNA replication. Binds acidic phospholipids. This Pseudomonas fluorescens (strain ATCC BAA-477 / NRRL B-23932 / Pf-5) protein is Chromosomal replication initiator protein DnaA.